We begin with the raw amino-acid sequence, 707 residues long: Coiled-coil domain-containing protein 177 (707 aa).

Disordered regions lie at residues 1–65 (MVDP…EGGR) and 183–294 (PSAG…SALT). Composition is skewed to low complexity over residues 38–49 (AASSASASASAA), 183–215 (PSAGSSSSCSSASLPASPAPRAARKASPSPSSA), and 243–258 (ALSSESGASSSSYSGE). A Phosphoserine modification is found at serine 311. Positions 364–605 (GQWELQRVHA…LQHATQVAEE (242 aa)) form a coiled coil. Disordered stretches follow at residues 372-426 (HAKQ…RSEE), 454-581 (KLQQ…EREH), 597-637 (QHAT…RDED), and 652-707 (ERSE…LDRK). Basic and acidic residues-rich tracts occupy residues 377 to 392 (REREEREKQRALEQGR), 399 to 426 (VEERRGRRGREEREAARRRQRQYERSEE), 454 to 484 (KLQQEQNLKQREEGLQEGRERAEQIRRERAQ), 491 to 514 (QRQEGQLQREKRELSRAERARHEA), 543 to 581 (ENYEHLVEQRTRELRERARREELQGRRAKEAAERKEREH), 618 to 637 (RLEKERAQRANKEKVERDED), and 652 to 664 (ERSEQLTRERRSA). Positions 665–675 (LESARSTARAS) are enriched in low complexity. Basic and acidic residues predominate over residues 677-707 (HVREKVREETNTRSFDRMVREAQLHASLDRK).

The sequence is that of Coiled-coil domain-containing protein 177 (CCDC177) from Homo sapiens (Human).